The chain runs to 40 residues: Spodomicin (40 aa).

Cystine bridges form between C6/C20, C10/C32, and C21/C39.

In terms of assembly, monomer. Contains three disulfide bonds. Hemolymph.

The protein localises to the secreted. Functionally, fungicide. The chain is Spodomicin from Spodoptera littoralis (Egyptian cotton leafworm).